The sequence spans 500 residues: Sodium/potassium/calcium exchanger 5 (500 aa).

A signal peptide spans 1–29 (MQTKGGQTWARRALLLGILWATAHLPLSG). Residues 30 to 66 (TSLPQRLPRATGNSTQCVISPSSEFPEGFFTRQERRD) lie on the Extracellular side of the membrane. The helical transmembrane segment at 67-87 (GGIIIYFLIIVYMFMAISIVC) threads the bilayer. The Cytoplasmic portion of the chain corresponds to 88 to 111 (DEYFLPSLEIISESLGLSQDVAGT). The helical transmembrane segment at 112–132 (TFMAAGSSAPELVTAFLGVFI) threads the bilayer. Over 133-136 (TKGD) the chain is Extracellular. A helical transmembrane segment spans residues 137–157 (IGISTILGSAIYNLLGICAAC). Topologically, residues 158–169 (GLLSNTVSTLSC) are cytoplasmic. The chain crosses the membrane as a helical span at residues 170 to 190 (WPLFRDCAAYTISAAAVLGII). At 191-195 (YDNQV) the chain is on the extracellular side. A helical transmembrane segment spans residues 196-216 (YWYEGALLLLIYGLYVLVLCF). The Cytoplasmic segment spans residues 217–302 (DIKINQYIIK…PSVFNMPEAD (86 aa)). The chain crosses the membrane as a helical span at residues 303–323 (LKRIFWVLSLPIITLLFLTTP). Residues 324–333 (DCRKKFWKNY) are Extracellular-facing. Residues 334–354 (FVITFFMSAIWISAFTYILVW) traverse the membrane as a helical segment. Topologically, residues 355–368 (MVTITGETLEIPDT) are cytoplasmic. A helical membrane pass occupies residues 369 to 389 (VMGLTLLAAGTSIPDTIASVL). Topologically, residues 390–399 (VARKGKGDMA) are extracellular. Residues 400–420 (MSNIVGSNVFDMLCLGIPWFI) traverse the membrane as a helical segment. Over 421–437 (KTAFINGSAPAEVNSRG) the chain is Cytoplasmic. Residues 438 to 458 (LTYITISLNISIIFLFLAVHF) traverse the membrane as a helical segment. Residues 459 to 468 (NGWKLDRKLG) are Extracellular-facing. A helical transmembrane segment spans residues 469-489 (IVCLLSYLGLATLSVLYELGI). At 490–500 (IGNNKIRGCGG) the chain is on the cytoplasmic side.

This sequence belongs to the Ca(2+):cation antiporter (CaCA) (TC 2.A.19) family. SLC24A subfamily.

Its subcellular location is the golgi apparatus. The protein resides in the trans-Golgi network membrane. It is found in the melanosome. The enzyme catalyses Ca(2+)(out) + K(+)(out) + 4 Na(+)(in) = Ca(2+)(in) + K(+)(in) + 4 Na(+)(out). In terms of biological role, calcium, potassium:sodium antiporter that transports 1 Ca(2+) and 1 K(+) to the melanosome in exchange for 4 cytoplasmic Na(+). Involved in pigmentation, possibly by participating in ion transport in melanosomes. Predominant sodium-calcium exchanger in melanocytes. This chain is Sodium/potassium/calcium exchanger 5, found in Homo sapiens (Human).